A 104-amino-acid chain; its full sequence is N(4)-acetylcytidine amidohydrolase (104 aa).

Positions 6 to 96 (ITFYQRFEAD…TIYPNEHESW (91 aa)) constitute an ASCH domain. Lys21 acts as the Proton acceptor in catalysis. Residue Thr24 is the Nucleophile of the active site. Glu74 acts as the Proton donor in catalysis.

This sequence belongs to the N(4)-acetylcytidine amidohydrolase family.

The catalysed reaction is N(4)-acetylcytidine + H2O = cytidine + acetate + H(+). It catalyses the reaction N(4)-acetyl-2'-deoxycytidine + H2O = 2'-deoxycytidine + acetate + H(+). The enzyme catalyses N(4)-acetylcytosine + H2O = cytosine + acetate + H(+). Catalyzes the hydrolysis of N(4)-acetylcytidine (ac4C). This is N(4)-acetylcytidine amidohydrolase from Haemophilus influenzae (strain 86-028NP).